The primary structure comprises 103 residues: Histone H4 (103 aa).

Over residues 1–14 (MSGRGKGGKGLGKG) the composition is skewed to gly residues. Residues 1–20 (MSGRGKGGKGLGKGGAKRHR) form a disordered region. At K6 the chain carries N6-acetyl-N6-methyllysine; alternate. Residues K6, K9, and K13 each carry the N6-acetyllysine; alternate modification. N6-methyllysine; alternate occurs at positions 6, 9, and 13. N6-butyryllysine; alternate is present on residues K9 and K13. At K13 the chain carries N6-acetyl-N6-methyllysine; alternate. An N6-acetyllysine modification is found at K17. A DNA-binding region spans residues 17–21 (KRHRK). K32 carries the N6-succinyllysine modification. An Omega-N-methylarginine modification is found at R56. S61 and S65 each carry phosphoserine. At K78 the chain carries N6-succinyllysine. K80 carries the post-translational modification N6-acetyllysine. K92 carries the N6-glutaryllysine modification.

This sequence belongs to the histone H4 family. As to quaternary structure, the nucleosome is a histone octamer containing two molecules each of H2A, H2B, H3 and H4 assembled in one H3-H4 heterotetramer and two H2A-H2B heterodimers. The octamer wraps approximately 147 bp of DNA. Histone H4 is a component of the UAF (upstream activation factor) complex which consists of UAF30, RRN5, RRN9, RRN10, and histones H3 and H4. In terms of processing, glutarylation at Lys-92 (H4K91glu) destabilizes nucleosomes by promoting dissociation of the H2A-H2B dimers from nucleosomes.

It localises to the nucleus. It is found in the chromosome. In terms of biological role, core component of nucleosome. Nucleosomes wrap and compact DNA into chromatin, limiting DNA accessibility to the cellular machineries which require DNA as a template. Histones thereby play a central role in transcription regulation, DNA repair, DNA replication and chromosomal stability. DNA accessibility is regulated via a complex set of post-translational modifications of histones, also called histone code, and nucleosome remodeling. Component of the UAF (upstream activation factor) complex which interacts with the upstream element of the RNA polymerase I promoter and forms a stable preinitiation complex. Together with SPT15/TBP UAF seems to stimulate basal transcription to a fully activated level. This is Histone H4 (HHF1) from Saccharomyces cerevisiae (strain ATCC 204508 / S288c) (Baker's yeast).